Reading from the N-terminus, the 159-residue chain is Cyclic pyranopterin monophosphate synthase (159 aa).

Residues 75–77 (LCH) and 113–114 (ME) contribute to the substrate site. Asp128 is a catalytic residue.

The protein belongs to the MoaC family. In terms of assembly, homohexamer; trimer of dimers.

The catalysed reaction is (8S)-3',8-cyclo-7,8-dihydroguanosine 5'-triphosphate = cyclic pyranopterin phosphate + diphosphate. Its pathway is cofactor biosynthesis; molybdopterin biosynthesis. In terms of biological role, catalyzes the conversion of (8S)-3',8-cyclo-7,8-dihydroguanosine 5'-triphosphate to cyclic pyranopterin monophosphate (cPMP). This chain is Cyclic pyranopterin monophosphate synthase, found in Cereibacter sphaeroides (strain ATCC 17029 / ATH 2.4.9) (Rhodobacter sphaeroides).